We begin with the raw amino-acid sequence, 317 residues long: Lipoyl synthase (317 aa).

The interval 1 to 21 (MVTVIDTLARPRHPEKANRPE) is disordered. Basic and acidic residues predominate over residues 12-21 (RHPEKANRPE). [4Fe-4S] cluster is bound by residues Cys-57, Cys-62, Cys-68, Cys-83, Cys-87, Cys-90, and Ser-296. In terms of domain architecture, Radical SAM core spans 69-285 (WEKKHATFMI…ETVAYAKGFL (217 aa)).

This sequence belongs to the radical SAM superfamily. Lipoyl synthase family. [4Fe-4S] cluster serves as cofactor.

Its subcellular location is the cytoplasm. The enzyme catalyses [[Fe-S] cluster scaffold protein carrying a second [4Fe-4S](2+) cluster] + N(6)-octanoyl-L-lysyl-[protein] + 2 oxidized [2Fe-2S]-[ferredoxin] + 2 S-adenosyl-L-methionine + 4 H(+) = [[Fe-S] cluster scaffold protein] + N(6)-[(R)-dihydrolipoyl]-L-lysyl-[protein] + 4 Fe(3+) + 2 hydrogen sulfide + 2 5'-deoxyadenosine + 2 L-methionine + 2 reduced [2Fe-2S]-[ferredoxin]. It participates in protein modification; protein lipoylation via endogenous pathway; protein N(6)-(lipoyl)lysine from octanoyl-[acyl-carrier-protein]: step 2/2. Its function is as follows. Catalyzes the radical-mediated insertion of two sulfur atoms into the C-6 and C-8 positions of the octanoyl moiety bound to the lipoyl domains of lipoate-dependent enzymes, thereby converting the octanoylated domains into lipoylated derivatives. The protein is Lipoyl synthase of Xanthobacter autotrophicus (strain ATCC BAA-1158 / Py2).